A 76-amino-acid polypeptide reads, in one-letter code: ATP synthase subunit c (76 aa).

Transmembrane regions (helical) follow at residues 13 to 33 (LNVV…GILI) and 55 to 75 (FLGL…AFIF).

Belongs to the ATPase C chain family. As to quaternary structure, F-type ATPases have 2 components, F(1) - the catalytic core - and F(0) - the membrane proton channel. F(1) has five subunits: alpha(3), beta(3), gamma(1), delta(1), epsilon(1). F(0) has three main subunits: a(1), b(2) and c(10-14). The alpha and beta chains form an alternating ring which encloses part of the gamma chain. F(1) is attached to F(0) by a central stalk formed by the gamma and epsilon chains, while a peripheral stalk is formed by the delta and b chains.

The protein resides in the cell membrane. Its function is as follows. F(1)F(0) ATP synthase produces ATP from ADP in the presence of a proton or sodium gradient. F-type ATPases consist of two structural domains, F(1) containing the extramembraneous catalytic core and F(0) containing the membrane proton channel, linked together by a central stalk and a peripheral stalk. During catalysis, ATP synthesis in the catalytic domain of F(1) is coupled via a rotary mechanism of the central stalk subunits to proton translocation. In terms of biological role, key component of the F(0) channel; it plays a direct role in translocation across the membrane. A homomeric c-ring of between 10-14 subunits forms the central stalk rotor element with the F(1) delta and epsilon subunits. This is ATP synthase subunit c from Bifidobacterium animalis subsp. lactis (strain AD011).